The chain runs to 323 residues: Global nitrogen regulator NrpRI (323 aa).

A winged helix-turn-helix region spans residues I11 to M76. The NRD stretch occupies residues G86–I323.

The protein belongs to the NrpR family. Forms a complex with NrpRII and the general archaeal transcription factors TBP and TFB. Interacts directly with NrpRII.

Its activity is regulated as follows. Under nitrogen limitation, binding of 2-oxoglutarate to the NrpRI/NrpRII complex decreases the binding affinity of NrpRI to DNA as well as the binding affinity of NrpRII to TBP and TFB, which leads to removal of the complex from the operator, RNA polymerase recruitment and initiation of transcription. Its function is as follows. Plays a major role in nitrogen regulation. Under nitrogen sufficiency, binds to the nifH and the glnk1 promoters, leading to repression of the transcription of the genes. The chain is Global nitrogen regulator NrpRI from Methanosarcina mazei (strain ATCC BAA-159 / DSM 3647 / Goe1 / Go1 / JCM 11833 / OCM 88) (Methanosarcina frisia).